A 376-amino-acid polypeptide reads, in one-letter code: Arsenite methyltransferase (376 aa).

Residues S47 and S336 each carry the phosphoserine modification. Residues 354 to 363 are compositionally biased toward basic and acidic residues; sequence SDKMKPRHAP. Positions 354–376 are disordered; sequence SDKMKPRHAPEGTGGCCGKRKNC.

This sequence belongs to the methyltransferase superfamily. Arsenite methyltransferase family.

It is found in the cytoplasm. The protein localises to the cytosol. It carries out the reaction arsenic triglutathione + [thioredoxin]-dithiol + S-adenosyl-L-methionine + 2 H2O = methylarsonous acid + [thioredoxin]-disulfide + 3 glutathione + S-adenosyl-L-homocysteine + H(+). The catalysed reaction is arsenic triglutathione + 2 [thioredoxin]-dithiol + 2 S-adenosyl-L-methionine + H2O = dimethylarsinous acid + 2 [thioredoxin]-disulfide + 3 glutathione + 2 S-adenosyl-L-homocysteine + 2 H(+). It catalyses the reaction arsenic triglutathione + 3 [thioredoxin]-dithiol + 3 S-adenosyl-L-methionine = trimethylarsine + 3 [thioredoxin]-disulfide + 3 glutathione + 3 S-adenosyl-L-homocysteine + 3 H(+). Catalyzes the transfer of a methyl group from AdoMet to trivalent arsenicals producing methylated and dimethylated arsenicals. It methylates arsenite to form methylarsonate, Me-AsO(3)H(2), which is reduced by methylarsonate reductase to methylarsonite, Me-As(OH)2. Methylarsonite is also a substrate and it is converted into the much less toxic compound dimethylarsinate (cacodylate), Me(2)As(O)-OH. In Mus musculus (Mouse), this protein is Arsenite methyltransferase (As3mt).